The primary structure comprises 430 residues: Aspartate aminotransferase, mitochondrial (430 aa).

The N-terminal 29 residues, Met-1 to Ala-29, are a transit peptide targeting the mitochondrion. Residue Thr-48 is modified to Phosphothreonine. Residue Lys-59 is modified to N6-acetyllysine. Substrate is bound at residue Gly-65. At Lys-73 the chain carries N6-acetyllysine; alternate. Lys-73 bears the N6-succinyllysine; alternate mark. Lys-82 is modified (N6-acetyllysine). Residue Lys-90 is modified to N6-acetyllysine; alternate. Lys-90 carries the post-translational modification N6-succinyllysine; alternate. Tyr-96 bears the 3'-nitrotyrosine; alternate mark. Tyr-96 bears the Phosphotyrosine; alternate mark. N6-acetyllysine; alternate occurs at positions 107 and 122. 2 positions are modified to N6-succinyllysine; alternate: Lys-107 and Lys-122. Ser-143 bears the Phosphoserine mark. Lys-159 bears the N6-acetyllysine; alternate mark. Lys-159 carries the post-translational modification N6-succinyllysine; alternate. A substrate-binding site is contributed by Trp-162. Lys-185 bears the N6-acetyllysine; alternate mark. Residue Lys-185 is modified to N6-succinyllysine; alternate. Asn-215 serves as a coordination point for substrate. N6-succinyllysine is present on Lys-227. N6-acetyllysine is present on Lys-234. N6-acetyllysine; alternate is present on residues Lys-279 and Lys-296. Lys-279 is modified (N6-(pyridoxal phosphate)lysine; alternate). At Lys-296 the chain carries N6-succinyllysine; alternate. Residue Lys-302 is modified to N6-acetyllysine. Lys-309 bears the N6-acetyllysine; alternate mark. At Lys-309 the chain carries N6-succinyllysine; alternate. Arg-313 bears the Asymmetric dimethylarginine mark. Residue Lys-338 is modified to N6-acetyllysine; alternate. At Lys-338 the chain carries N6-succinyllysine; alternate. Lys-345 is modified (N6-acetyllysine). The residue at position 363 (Lys-363) is an N6-acetyllysine; alternate. Lys-363 is subject to N6-succinyllysine; alternate. Residues Lys-364 and Lys-387 each carry the N6-acetyllysine modification. An N6-acetyllysine; alternate mark is found at Lys-396 and Lys-404. N6-succinyllysine; alternate occurs at positions 396 and 404. Substrate is bound at residue Arg-407.

Belongs to the class-I pyridoxal-phosphate-dependent aminotransferase family. Homodimer. It depends on pyridoxal 5'-phosphate as a cofactor. Post-translationally, acetylation of Lys-296, Lys-345 and Lys-363 is observed in liver mitochondria from fasted mice but not from fed mice. As to expression, detected in brain (at protein level).

Its subcellular location is the mitochondrion matrix. It is found in the cell membrane. It carries out the reaction L-aspartate + 2-oxoglutarate = oxaloacetate + L-glutamate. It catalyses the reaction L-kynurenine + 2-oxoglutarate = kynurenate + L-glutamate + H2O. Its function is as follows. Catalyzes the irreversible transamination of the L-tryptophan metabolite L-kynurenine to form kynurenic acid (KA). As a member of the malate-aspartate shuttle, it has a key role in the intracellular NAD(H) redox balance. Is important for metabolite exchange between mitochondria and cytosol, and for amino acid metabolism. Facilitates cellular uptake of long-chain free fatty acids. The protein is Aspartate aminotransferase, mitochondrial (Got2) of Mus musculus (Mouse).